A 580-amino-acid polypeptide reads, in one-letter code: Bifunctional lycopene cyclase/phytoene synthase (580 aa).

A run of 3 helical transmembrane segments spans residues 3-23, 35-55, and 65-85; these read WEYAQVHLKYTIPFGVVLAAV, KLVFLITVAVVSTIPWDSYLI, and GVVVGLTAWDIPAEELFFFVI. A glycan (N-linked (GlcNAc...) asparagine) is linked at Asn89. The next 4 helical transmembrane spans lie at 116 to 136, 139 to 159, 171 to 191, and 214 to 234; these read IAGQILFASAIIFGLVSVSSG, GMYMGLILIWACPFLLFLWSI, NTALPIALPTLYLWVVDTFAL, and IEEAVFFLLTNTLIVFGLIAC.

This sequence in the N-terminal section; belongs to the lycopene beta-cyclase family. It in the C-terminal section; belongs to the phytoene/squalene synthase family.

The protein resides in the membrane. The catalysed reaction is all-trans-lycopene = gamma-carotene. It catalyses the reaction gamma-carotene = all-trans-beta-carotene. It carries out the reaction 2 (2E,6E,10E)-geranylgeranyl diphosphate = 15-cis-phytoene + 2 diphosphate. It functions in the pathway carotenoid biosynthesis; beta-carotene biosynthesis. The protein operates within carotenoid biosynthesis; phytoene biosynthesis; all-trans-phytoene from geranylgeranyl diphosphate: step 1/1. Its function is as follows. Bifunctional enzyme; part of the car gene cluster that mediates the biosynthesis of neurosporaxanthin, a carboxylic apocarotenoid acting as an essential protective pigments and leading to orange pigmentation. CarAR catalyzes the first step of the pathway by converting geranylgeranyl diphosphate to phytoene, as well as the later cyclization step that transforms the carB product lycopene into gamma-carotene. CarAR also converts part of gamma-carotene into beta-carotene. Neurosporaxanthin is synthesized from geranyl-geranyl pyrophosphate (GGPP) through several enzymatic activities. Phytoene synthase activity performed by the bifunctional enzyme carAR first produces phytoene from geranyl-geranyl pyrophosphate (GGPP). The phytoene dehydrogenase carB then introduces 4 desaturations to lead to lycopene which is substrate of the carotene cyclase activity of carAR that leads to the production of gamma-carotene. CarB then performs a 5th desaturation reaction to yield torulene. Torulene is the substrate of the dioxidase carT that breaks the molecule, removing five carbon atoms to yield beta-apo-4'-carotenal, whereas the aldehyde dehydrogenase carD mediates the last step by converting beta-apo-4'-carotenal into neurosporaxanthin. This Gibberella fujikuroi (strain CBS 195.34 / IMI 58289 / NRRL A-6831) (Bakanae and foot rot disease fungus) protein is Bifunctional lycopene cyclase/phytoene synthase.